A 329-amino-acid chain; its full sequence is Serine dehydratase-like (329 aa).

Met-1 is modified (N-acetylmethionine). The residue at position 48 (Lys-48) is an N6-(pyridoxal phosphate)lysine.

The protein belongs to the serine/threonine dehydratase family. As to quaternary structure, monomer. Homodimer. Requires pyridoxal 5'-phosphate as cofactor. As to expression, expressed in lung cancer cell lines.

The catalysed reaction is L-serine = pyruvate + NH4(+). The enzyme catalyses L-threonine = 2-oxobutanoate + NH4(+). It carries out the reaction L-glutamate = D-glutamate. In terms of biological role, catalyzes the pyridoxal-phosphate-dependent dehydrative deamination of L-threonine and L-serine to ammonia and alpha-ketobutyrate and pyruvate, respectively. Also exhibits racemase activity towards L-glutamate and D-glutamate. This Homo sapiens (Human) protein is Serine dehydratase-like (SDSL).